The following is a 567-amino-acid chain: Potassium-transporting ATPase potassium-binding subunit (567 aa).

Helical transmembrane passes span 5–25 (GWIQ…PLGF), 64–84 (TAYA…LYAL), 136–156 (GLTV…IALI), 179–199 (LYVL…LGIP), 254–274 (ISNL…TNVF), 285–305 (WAIL…CYWA), 330–350 (FGIA…CGAV), 357–376 (FTAL…EVIV), 421–441 (MLAI…AVVL), 486–506 (ITIG…ALAI), and 529–549 (LFVG…FFPA).

This sequence belongs to the KdpA family. The system is composed of three essential subunits: KdpA, KdpB and KdpC.

It is found in the cell inner membrane. Functionally, part of the high-affinity ATP-driven potassium transport (or Kdp) system, which catalyzes the hydrolysis of ATP coupled with the electrogenic transport of potassium into the cytoplasm. This subunit binds the periplasmic potassium ions and delivers the ions to the membrane domain of KdpB through an intramembrane tunnel. In Mesorhizobium japonicum (strain LMG 29417 / CECT 9101 / MAFF 303099) (Mesorhizobium loti (strain MAFF 303099)), this protein is Potassium-transporting ATPase potassium-binding subunit.